A 37-amino-acid chain; its full sequence is Large ribosomal subunit protein bL36 (37 aa).

It belongs to the bacterial ribosomal protein bL36 family.

This Trichodesmium erythraeum (strain IMS101) protein is Large ribosomal subunit protein bL36.